We begin with the raw amino-acid sequence, 384 residues long: PqqA peptide cyclase (384 aa).

The 216-residue stretch at 5–220 (VGLPLWLLAE…TNEYREKLKA (216 aa)) folds into the Radical SAM core domain. Cys19, Cys23, and Cys26 together coordinate [4Fe-4S] cluster.

The protein belongs to the radical SAM superfamily. PqqE family. In terms of assembly, interacts with PqqD. The interaction is necessary for activity of PqqE. Requires [4Fe-4S] cluster as cofactor.

It carries out the reaction [PQQ precursor protein] + S-adenosyl-L-methionine = E-Y cross-linked-[PQQ precursor protein] + 5'-deoxyadenosine + L-methionine + H(+). It functions in the pathway cofactor biosynthesis; pyrroloquinoline quinone biosynthesis. Functionally, catalyzes the cross-linking of a glutamate residue and a tyrosine residue in the PqqA protein as part of the biosynthesis of pyrroloquinoline quinone (PQQ). This chain is PqqA peptide cyclase, found in Acinetobacter baumannii (strain SDF).